The chain runs to 322 residues: Cyanophycinase (322 aa).

Catalysis depends on charge relay system residues serine 178, glutamate 196, and histidine 220.

Belongs to the peptidase S51 family.

The catalysed reaction is [L-4-(L-arginin-2-N-yl)aspartate](n) + H2O = [L-4-(L-arginin-2-N-yl)aspartate](n-1) + L-4-(L-arginin-2-N-yl)aspartate. Functionally, exopeptidase that catalyzes the hydrolytic cleavage of multi-L-arginyl-poly-L-aspartic acid (cyanophycin; a water-insoluble reserve polymer) into aspartate-arginine dipeptides. The polypeptide is Cyanophycinase (cphB) (Synechococcus elongatus).